The following is a 597-amino-acid chain: Medium/long-chain-fatty-acid--CoA ligase FadD6 (597 aa).

The protein belongs to the ATP-dependent AMP-binding enzyme family.

It carries out the reaction a medium-chain fatty acid + ATP + CoA = a medium-chain fatty acyl-CoA + AMP + diphosphate. The enzyme catalyses a long-chain fatty acid + ATP + CoA = a long-chain fatty acyl-CoA + AMP + diphosphate. The catalysed reaction is hexanoate + ATP + CoA = hexanoyl-CoA + AMP + diphosphate. It catalyses the reaction octanoate + ATP + CoA = octanoyl-CoA + AMP + diphosphate. It carries out the reaction decanoate + ATP + CoA = decanoyl-CoA + AMP + diphosphate. The enzyme catalyses dodecanoate + ATP + CoA = dodecanoyl-CoA + AMP + diphosphate. The catalysed reaction is tetradecanoate + ATP + CoA = tetradecanoyl-CoA + AMP + diphosphate. It catalyses the reaction hexadecanoate + ATP + CoA = hexadecanoyl-CoA + AMP + diphosphate. It carries out the reaction octadecanoate + ATP + CoA = octadecanoyl-CoA + AMP + diphosphate. The enzyme catalyses 9-decenoate + ATP + CoA = 9-decenoyl-CoA + AMP + diphosphate. The catalysed reaction is (9Z)-octadecenoate + ATP + CoA = (9Z)-octadecenoyl-CoA + AMP + diphosphate. It catalyses the reaction 2-hydroxyhexadecanoate + ATP + CoA = 2-hydroxyhexadecanoyl-CoA + AMP + diphosphate. It carries out the reaction 3-hydroxytetradecanoate + ATP + CoA = 3-hydroxytetradecanoyl-CoA + AMP + diphosphate. The enzyme catalyses 12-hydroxyoctadecanoate + ATP + CoA = 12-hydroxyoctadecanoyl-CoA + AMP + diphosphate. The catalysed reaction is 15-hydroxypentadecanoate + ATP + CoA = 15-hydroxypentadecanoyl-CoA + AMP + diphosphate. It catalyses the reaction 16-hydroxyhexadecanoate + ATP + CoA = 16-hydroxyhexadecanoyl-CoA + AMP + diphosphate. It carries out the reaction 2-methylhexadecanoate + ATP + CoA = 2-methylhexadecanoyl-CoA + AMP + diphosphate. The enzyme catalyses 3-methylundecanoate + ATP + CoA = 3-methylundecanoyl-CoA + AMP + diphosphate. The catalysed reaction is 12-methyltridecanoate + ATP + CoA = 12-methyltridecanoyl-CoA + AMP + diphosphate. It catalyses the reaction 12-methyloctadecanoate + ATP + CoA = 12-methyloctadecanoyl-CoA + AMP + diphosphate. Catalyzes the activation of medium/long-chain fatty acids as acyl-coenzyme A (acyl-CoA). May play a role in the uptake of fatty acids by trapping them metabolically as CoA esters. May also play an important role in the channeling of fatty acids into triacylglycerol (TAG) for use by Mycobacterium during its dormancy. The protein is Medium/long-chain-fatty-acid--CoA ligase FadD6 of Mycobacterium tuberculosis (strain ATCC 25618 / H37Rv).